Here is a 151-residue protein sequence, read N- to C-terminus: Nucleoside diphosphate kinase (151 aa).

Residues K10, F58, R86, T92, R103, and N113 each contribute to the ATP site. The active-site Pros-phosphohistidine intermediate is H116.

The protein belongs to the NDK family. As to quaternary structure, homotetramer. Mg(2+) is required as a cofactor.

The protein resides in the cytoplasm. It catalyses the reaction dZDP + ATP = dZTP + ADP. The enzyme catalyses a 2'-deoxyribonucleoside 5'-diphosphate + ATP = a 2'-deoxyribonucleoside 5'-triphosphate + ADP. The catalysed reaction is a ribonucleoside 5'-diphosphate + ATP = a ribonucleoside 5'-triphosphate + ADP. It participates in purine metabolism. Major role in the synthesis of nucleoside triphosphates other than ATP. The ATP gamma phosphate is transferred to the NDP beta phosphate via a ping-pong mechanism, using a phosphorylated active-site intermediate. Its function is as follows. (Microbial infection) Catalyzes the phosphorylation of dZDP to dZTP, when the bacterium is infected by a phage that produces the substrate for the synthesis of dZTP (2- amino-2'-deoxyadenosine 5'-triphosphate), which is then used by the phage as a DNA polymerase substrate. This Synechococcus sp. (strain CC9902) protein is Nucleoside diphosphate kinase.